The chain runs to 374 residues: Proton-coupled zinc antiporter SLC30A8 (374 aa).

The Cytoplasmic portion of the chain corresponds to M1–K67. Residues Y18–N48 form a disordered region. H45, C46, and H47 together coordinate Zn(2+). The HCH Motif; seals regulatory zinc-binding pocket signature appears at H45 to H47. Residues L68 to I88 form a helical membrane-spanning segment. The Lumenal, vesicle segment spans residues A89–S91. A helical membrane pass occupies residues L92–L112. Residues H100, D104, and H131 each contribute to the Zn(2+) site. At C113–E134 the chain is on the cytoplasmic side. A helical membrane pass occupies residues I135–L155. Over A156–G169 the chain is Lumenal, vesicle. Residues T170–L190 traverse the membrane as a helical segment. At H191–A222 the chain is on the cytoplasmic side. A helical transmembrane segment spans residues F223 to I243. The Zn(2+) site is built by H225 and D229. The Lumenal, vesicle portion of the chain corresponds to Y244 to M251. A helical membrane pass occupies residues A252–L272. The Cytoplasmic segment spans residues R273 to Q374. Positions 306, 323, 350, 357, 366, and 369 each coordinate Zn(2+).

This sequence belongs to the cation diffusion facilitator (CDF) transporter (TC 2.A.4) family. SLC30A subfamily. As to quaternary structure, homodimer.

Its subcellular location is the cytoplasmic vesicle. The protein resides in the secretory vesicle membrane. The protein localises to the cell membrane. It carries out the reaction Zn(2+)(in) + 2 H(+)(out) = Zn(2+)(out) + 2 H(+)(in). Its function is as follows. Proton-coupled zinc ion antiporter mediating the entry of zinc into the lumen of pancreatic beta cell secretory granules, thereby regulating insulin secretion. The polypeptide is Proton-coupled zinc antiporter SLC30A8 (slc30a8) (Xenopus tropicalis (Western clawed frog)).